We begin with the raw amino-acid sequence, 119 residues long: Ribonuclease P protein component (119 aa).

Belongs to the RnpA family. As to quaternary structure, consists of a catalytic RNA component (M1 or rnpB) and a protein subunit.

It catalyses the reaction Endonucleolytic cleavage of RNA, removing 5'-extranucleotides from tRNA precursor.. In terms of biological role, RNaseP catalyzes the removal of the 5'-leader sequence from pre-tRNA to produce the mature 5'-terminus. It can also cleave other RNA substrates such as 4.5S RNA. The protein component plays an auxiliary but essential role in vivo by binding to the 5'-leader sequence and broadening the substrate specificity of the ribozyme. The sequence is that of Ribonuclease P protein component from Bacillus pumilus (strain SAFR-032).